A 264-amino-acid polypeptide reads, in one-letter code: Flagellar brake protein YcgR 1 (264 aa).

In terms of domain architecture, PilZ spans 132–249 (QRREFFRLES…RLAMIERYIA (118 aa)).

Belongs to the YcgR family. In terms of assembly, monomer. Interacts with the flagellar basal bodies.

The protein resides in the bacterial flagellum basal body. Functionally, acts as a flagellar brake, regulating swimming and swarming in a bis-(3'-5') cyclic diguanylic acid (c-di-GMP)-dependent manner. Binds 1 c-di-GMP dimer per subunit. Increasing levels of c-di-GMP lead to decreased motility. The polypeptide is Flagellar brake protein YcgR 1 (Dechloromonas aromatica (strain RCB)).